We begin with the raw amino-acid sequence, 138 residues long: Acidic phospholipase A2 Ts-A1 (138 aa).

A signal peptide spans 1–16; sequence MRTLWIMAVLQVGVEG. 7 disulfide bridges follow: Cys42–Cys131, Cys44–Cys60, Cys59–Cys111, Cys65–Cys138, Cys66–Cys104, Cys73–Cys97, and Cys91–Cys102. Ca(2+) is bound by residues Phe43, Gly45, and Gly47. Residue His63 is part of the active site. Asp64 lines the Ca(2+) pocket. Residue Asp105 is part of the active site.

The cofactor is Ca(2+). As to expression, expressed by the venom gland.

It localises to the secreted. It catalyses the reaction a 1,2-diacyl-sn-glycero-3-phosphocholine + H2O = a 1-acyl-sn-glycero-3-phosphocholine + a fatty acid + H(+). Functionally, snake venom phospholipase A2 (PLA2) that shows a moderate inhibition of ADP-induced human platelet aggregation when tested on platelet rich plasma. Exhibits high hydrolytic activities and prefers the anionic micelles (dPPC with deoxycholate) to the zwitterionic micelles (dPPC with Triton X-100). PLA2 catalyzes the calcium-dependent hydrolysis of the 2-acyl groups in 3-sn-phosphoglycerides. The chain is Acidic phospholipase A2 Ts-A1 from Trimeresurus stejnegeri (Chinese green tree viper).